The sequence spans 108 residues: uncharacterized protein (108 aa).

Belongs to the baculoviridae 11 kDa protein family.

This is an uncharacterized protein from Orgyia pseudotsugata (Douglas-fir tussock moth).